The chain runs to 229 residues: Enolase-phosphatase E1 (229 aa).

Belongs to the HAD-like hydrolase superfamily. MasA/MtnC family. As to quaternary structure, monomer. It depends on Mg(2+) as a cofactor.

The catalysed reaction is 5-methylsulfanyl-2,3-dioxopentyl phosphate + H2O = 1,2-dihydroxy-5-(methylsulfanyl)pent-1-en-3-one + phosphate. The protein operates within amino-acid biosynthesis; L-methionine biosynthesis via salvage pathway; L-methionine from S-methyl-5-thio-alpha-D-ribose 1-phosphate: step 3/6. Its pathway is amino-acid biosynthesis; L-methionine biosynthesis via salvage pathway; L-methionine from S-methyl-5-thio-alpha-D-ribose 1-phosphate: step 4/6. Its function is as follows. Bifunctional enzyme that catalyzes the enolization of 2,3-diketo-5-methylthiopentyl-1-phosphate (DK-MTP-1-P) into the intermediate 2-hydroxy-3-keto-5-methylthiopentenyl-1-phosphate (HK-MTPenyl-1-P), which is then dephosphorylated to form the acireductone 1,2-dihydroxy-3-keto-5-methylthiopentene (DHK-MTPene). This is Enolase-phosphatase E1 from Enterobacter sp. (strain 638).